The sequence spans 453 residues: Probable multidrug resistance protein NorM (453 aa).

Helical transmembrane passes span 13–34, 49–71, 92–114, 129–151, 164–183, 193–215, 244–266, 286–308, 317–339, 359–381, 388–410, and 420–442; these read QFALLFFPIFVTQMSLFAMSFF, GVAIGTSIWIPVSTGLTGILMAT, IQAVYLAICASFVVILIGLFTVT, IAAQFLSIIAIGIIPLFTYTVLR, MIITLLSLPINVVLNYVLIF, GVGAAIASAATYWCILIITVMII, LGVPIGFAIFFETSIFAAVTLMM, LLYMTPLSLAMAMTIAVGFEVGA, YGFIGIGLALAFALLYSILLYFF, EFLIFAILFQISDAIATPVQGAL, NVALIMTLIAYWVIGLPLGYILA, and YWIGLIIGLAFGATFLLIRLFQV.

This sequence belongs to the multi antimicrobial extrusion (MATE) (TC 2.A.66.1) family.

The protein resides in the cell membrane. Its function is as follows. Multidrug efflux pump. The sequence is that of Probable multidrug resistance protein NorM (norM) from Bacillus thuringiensis subsp. konkukian (strain 97-27).